Here is an 87-residue protein sequence, read N- to C-terminus: Small ribosomal subunit protein bS20 (87 aa).

Positions 1–27 (MANIKSAKKRALQSEKRRQHNASRRSM) are disordered.

It belongs to the bacterial ribosomal protein bS20 family.

In terms of biological role, binds directly to 16S ribosomal RNA. The protein is Small ribosomal subunit protein bS20 of Aeromonas hydrophila subsp. hydrophila (strain ATCC 7966 / DSM 30187 / BCRC 13018 / CCUG 14551 / JCM 1027 / KCTC 2358 / NCIMB 9240 / NCTC 8049).